The following is a 230-amino-acid chain: Uracil-DNA glycosylase (230 aa).

Asp-70 (proton acceptor) is an active-site residue.

The protein belongs to the uracil-DNA glycosylase (UDG) superfamily. UNG family.

It is found in the cytoplasm. It carries out the reaction Hydrolyzes single-stranded DNA or mismatched double-stranded DNA and polynucleotides, releasing free uracil.. Functionally, excises uracil residues from the DNA which can arise as a result of misincorporation of dUMP residues by DNA polymerase or due to deamination of cytosine. This Pseudomonas putida (strain ATCC 700007 / DSM 6899 / JCM 31910 / BCRC 17059 / LMG 24140 / F1) protein is Uracil-DNA glycosylase.